The sequence spans 220 residues: Probable acrEF/envCD operon repressor (220 aa).

In terms of domain architecture, HTH tetR-type spans 10–70; that stretch reads LKTRQELIET…EMWLQQPSLR (61 aa). Residues 33 to 52 constitute a DNA-binding region (H-T-H motif); sequence TLNDIADAANVTRGAIYWHF.

In terms of biological role, potential regulator protein for the acrEF/envCD genes. The polypeptide is Probable acrEF/envCD operon repressor (envR) (Escherichia coli O157:H7).